The primary structure comprises 747 residues: Cysteine--tRNA ligase, cytoplasmic (747 aa).

Positions 1-26 (MTESWEQGKGRRTQPPWSAPNTNEQP) are disordered. Positions 15 to 25 (PPWSAPNTNEQ) are enriched in polar residues. Cysteine 54 lines the Zn(2+) pocket. An L-cysteine-binding site is contributed by glycine 55. The 'HIGH' region signature appears at 56–66 (PTVYDASHMGH). An L-cysteine-binding site is contributed by threonine 95. The 'KIIK' region motif lies at 100–103 (KIIK). Residues cysteine 347, histidine 372, and glutamate 376 each coordinate Zn(2+). Histidine 372 is an L-cysteine binding site. The 'KMSKS' region signature appears at 405–409 (KMSKS). Lysine 408 contributes to the ATP binding site. Residues 651 to 683 (EEKRKAEEEKQRKKEEAARKKQQQEAAKLEKMK) are compositionally biased toward basic and acidic residues. 2 disordered regions span residues 651-685 (EEKR…MKIS) and 700-721 (FDES…GQTK).

Belongs to the class-I aminoacyl-tRNA synthetase family. In terms of assembly, homodimer. Zn(2+) serves as cofactor.

It localises to the cytoplasm. It carries out the reaction tRNA(Cys) + L-cysteine + ATP = L-cysteinyl-tRNA(Cys) + AMP + diphosphate. Functionally, catalyzes the ATP-dependent ligation of cysteine to tRNA(Cys). In Xenopus laevis (African clawed frog), this protein is Cysteine--tRNA ligase, cytoplasmic (cars1).